A 271-amino-acid polypeptide reads, in one-letter code: Aquaporin-11 (271 aa).

At 1–14 (MSALLGLPPEVQDT) the chain is on the cytoplasmic side. Residues 15–35 (CISLGLMLLVVLFMGLARVIA) traverse the membrane as a helical segment. Residues 36-41 (RQQLHR) lie on the Lumenal side of the membrane. Residues 42–62 (PMVHAFVLEFLATFQLCYCTH) form a helical membrane-spanning segment. The Cytoplasmic portion of the chain corresponds to 63–76 (ELQLLSEQDSGHPT). A helical transmembrane segment spans residues 77–97 (WTLTLIYFFSLVHGLTLVGTA). The Lumenal segment spans residues 98-166 (SNPCGVMMQM…NPINTDISKA (69 aa)). The short motif at 99-101 (NPC) is the NPC element. Residues 167–187 (IIIEAICSFIFHSALLHFQEV) form a helical membrane-spanning segment. The Cytoplasmic portion of the chain corresponds to 188–194 (RTKLRIH). The helical transmembrane segment at 195-215 (VLAALITFLAYAGGSLTGALF) threads the bilayer. Positions 216–218 (NPA) match the NPA motif. The Lumenal portion of the chain corresponds to 216–234 (NPALALSLHFPCFDESFYK). Residues 235 to 255 (FFVVYWVAPSLGVLLMILMFS) traverse the membrane as a helical segment. Over 256–271 (FFLPWLHNNQLSNKKE) the chain is Cytoplasmic.

Belongs to the MIP/aquaporin (TC 1.A.8) family. AQP11/AQP12 subfamily. Homodimer; disulfide-linked. Homotetramer. Can also form homomultimer. Post-translationally, not glycosylated. Expressed in retina specifically at retinal Mueller glial cells. Expressed in adult testis, in the elongated spermatids (ES) and in residual bodies inside Sertoli cells.

The protein resides in the endoplasmic reticulum membrane. The protein localises to the cytoplasmic vesicle membrane. Its subcellular location is the cell membrane. The catalysed reaction is H2O(in) = H2O(out). It catalyses the reaction glycerol(in) = glycerol(out). The enzyme catalyses H2O2(out) = H2O2(in). In terms of biological role, channel protein that facilitates the transport of water, glycerol and hydrogen peroxide across membrane of cell or organelles guaranteeing intracellular homeostasis in several organes like liver, kidney and brain. In situation of stress, participates in endoplasmic reticulum (ER) homeostasis by regulating redox homeostasis through the transport of hydrogen peroxide across the endoplasmic reticulum membrane thereby regulating the oxidative stress through the NADPH oxidase 2 pathway. Plays a role by maintaining an environment suitable for translation or protein foldings in the ER lumen namely by participating in the PKD1 glycosylation processing resulting in regulation of PKD1 membrane trafficking thereby preventing the accumulation of unfolding protein in ER. Plays a role in the proximal tubule function by regulating its endosomal acidification. May play a role in postnatal kidney development. This is Aquaporin-11 from Rattus norvegicus (Rat).